The following is a 201-amino-acid chain: Large ribosomal subunit protein uL4 (201 aa).

The interval 44–68 (KAQKTRSEVAGTTKKSKKQKGGGAR) is disordered.

Belongs to the universal ribosomal protein uL4 family. Part of the 50S ribosomal subunit.

Functionally, one of the primary rRNA binding proteins, this protein initially binds near the 5'-end of the 23S rRNA. It is important during the early stages of 50S assembly. It makes multiple contacts with different domains of the 23S rRNA in the assembled 50S subunit and ribosome. In terms of biological role, forms part of the polypeptide exit tunnel. In Xanthomonas axonopodis pv. citri (strain 306), this protein is Large ribosomal subunit protein uL4.